We begin with the raw amino-acid sequence, 55 residues long: UPF0434 protein BARBAKC583_1098 (55 aa).

The protein belongs to the UPF0434 family.

The chain is UPF0434 protein BARBAKC583_1098 from Bartonella bacilliformis (strain ATCC 35685 / KC583 / Herrer 020/F12,63).